A 177-amino-acid chain; its full sequence is Transmembrane protein 190 (177 aa).

Positions 1-21 are cleaved as a signal peptide; the sequence is MLGCGIPALGLLLLLQGSADG. Residues 22–81 are Extracellular-facing; it reads NGIQGFFYPWSCEGDIWDRESCGGQAAIDSPNLCLRLRCCYRNGVCYHQRPDENVRRKHM. Residues 31 to 71 enclose the P-type domain; it reads WSCEGDIWDRESCGGQAAIDSPNLCLRLRCCYRNGVCYHQR. Disulfide bonds link cysteine 33/cysteine 61, cysteine 43/cysteine 60, and cysteine 55/cysteine 67. A helical membrane pass occupies residues 82–102; the sequence is WALVWTCSGLLLLSCSICLFW. At 103–177 the chain is on the cytoplasmic side; that stretch reads WAKRRDVLHM…EETEGEEEED (75 aa). Positions 131–177 are disordered; the sequence is KHRGTKKTPSTGSVPVALSKESRDVEGGTEGEGTEEGEETEGEEEED. The segment covering 157 to 177 has biased composition (acidic residues); the sequence is GGTEGEGTEEGEETEGEEEED.

Its subcellular location is the membrane. This chain is Transmembrane protein 190 (TMEM190), found in Homo sapiens (Human).